Reading from the N-terminus, the 1493-residue chain is Mitogen-activated protein kinase kinase kinase 1 (1493 aa).

Low complexity-rich tracts occupy residues 1–23 (MAAA…ASPE) and 33–42 (GSGAPAAGAG). 2 disordered regions span residues 1 to 171 (MAAA…DRPE) and 222 to 295 (LQGE…EETS). The residue at position 2 (alanine 2) is an N-acetylalanine. Serine 21 carries the phosphoserine modification. A compositionally biased stretch (pro residues) spans 84–94 (PPCPSTSPSPE). Composition is skewed to low complexity over residues 95–108 (PADA…FQPA) and 135–151 (ARSP…APSG). Position 137 is a phosphoserine (serine 137). Positions 152 to 171 (REMENKETLKGLHKMDDRPE) are enriched in basic and acidic residues. Residues 230–257 (SAAPAPKGRRSPSPGSSPSGRSGKPESP) show a composition bias toward low complexity. The residue at position 265 (serine 265) is a Phosphoserine. Phosphothreonine is present on threonine 275. Serine 282, serine 287, and serine 290 each carry phosphoserine. An SWIM-type zinc finger spans residues 328–356 (YRVFIGPQNCSCGRGTFCIHLLFVMLRVF). An RING-type zinc finger spans residues 433-482 (CPICLLGMLDEESLTVCEDGCRNKLHHHCMSIWAEECRRNREPLICPLCR). The span at 496 to 506 (SSPVDSPTSLR) shows a compositional bias: polar residues. Disordered regions lie at residues 496–524 (SSPV…SQRR), 866–910 (DTLD…LSAS), 923–955 (VGLP…SPLS), and 992–1060 (PCKI…ASKN). A phosphoserine mark is found at serine 497, serine 521, and serine 910. The segment covering 507–522 (GVQQPSSPQQPVAGSQ) has biased composition (low complexity). Polar residues-rich tracts occupy residues 925–940 (LPSS…TVQT) and 998–1014 (ASPQ…QRTC). A phosphoserine mark is found at serine 999 and serine 1024. Positions 1049–1060 (GSTSKLGDASKN) are enriched in polar residues. One can recognise a Protein kinase domain in the interval 1224-1489 (WLKGQQIGLG…SRELLKHPVF (266 aa)). Residues 1230-1238 (IGLGAFSSC) and lysine 1253 each bind ATP. Aspartate 1350 serves as the catalytic Proton acceptor. Phosphothreonine; by autocatalysis is present on residues threonine 1381 and threonine 1393.

This sequence belongs to the protein kinase superfamily. STE Ser/Thr protein kinase family. MAP kinase kinase kinase subfamily. Binds both upstream activators and downstream substrates in multimolecular complexes through its N-terminus. Oligomerizes after binding MAP4K2 or TRAF2. Interacts (via the kinase catalytic domain) with STK38. Interacts with GRIPAP1. The cofactor is Mg(2+). Autophosphorylated. In terms of tissue distribution, most highly expressed in spleen, kidney and lung.

The protein resides in the membrane. It catalyses the reaction L-seryl-[protein] + ATP = O-phospho-L-seryl-[protein] + ADP + H(+). The enzyme catalyses L-threonyl-[protein] + ATP = O-phospho-L-threonyl-[protein] + ADP + H(+). Activated by autophosphorylation on Thr-1381 and Thr-1393 following oligomerization. Functionally, component of a protein kinase signal transduction cascade. Activates the ERK and JNK kinase pathways by phosphorylation of MAP2K1 and MAP2K4. May phosphorylate the MAPK8/JNK1 kinase. Activates CHUK and IKBKB, the central protein kinases of the NF-kappa-B pathway. In Rattus norvegicus (Rat), this protein is Mitogen-activated protein kinase kinase kinase 1 (Map3k1).